The following is a 1272-amino-acid chain: Protein diaphanous homolog 1 (1272 aa).

The residue at position 1 (Met1) is an N-acetylmethionine. Positions 1-12 are enriched in gly residues; the sequence is MEPPGGSLGPGR. The segment at 1–84 is disordered; the sequence is MEPPGGSLGP…YGDDPTAQSL (84 aa). Phosphoserine is present on residues Ser7, Ser22, and Ser36. Basic and acidic residues predominate over residues 44 to 65; it reads LMADELERFTSMRIKKEKEKPN. A compositionally biased stretch (polar residues) spans 67-84; that stretch reads AHRNSSASYGDDPTAQSL. The GBD/FH3 domain maps to 84 to 449; sequence LQDVSDEQVL…QIVLHKNGAD (366 aa). Positions 468–572 form a coiled coil; sequence MIDKTKVEKS…ASLSAAAITV (105 aa). Positions 573 to 755 are disordered; sequence PPSVPSRAPV…GMPPPPPFGF (183 aa). Composition is skewed to pro residues over residues 574–589, 596–622, and 640–658; these read PSVP…PPLP, IPPP…PPLP, and SPPP…PPLP. The FH1 domain maps to 583–764; it reads PPAPPLPGDS…FGVPAAPVLP (182 aa). The span at 659 to 674 shows a compositional bias: low complexity; it reads EGVGIPSPSSLPGGTA. Residues 675–753 are compositionally biased toward pro residues; the sequence is IPPPPPLPGS…GMGMPPPPPF (79 aa). Thr768 bears the Phosphothreonine mark. One can recognise an FH2 domain in the interval 769–1171; it reads PKKLYKPEVQ…MRRAKLAKEK (403 aa). The stretch at 1039–1196 forms a coiled coil; the sequence is DELAHVEKAS…IDMNAEGDET (158 aa). N6-acetyllysine occurs at positions 1057 and 1103. The residue at position 1121 (Tyr1121) is a Phosphotyrosine. The 29-residue stretch at 1194 to 1222 folds into the DAD domain; the sequence is DETGVMDSLLEALQSGAAFRRKRGPRQAN. Phosphoserine occurs at positions 1251 and 1254.

It belongs to the formin homology family. Diaphanous subfamily. Homodimer. Interacts with the GTP-bound form of RHOA. Interacts with RHOC, PFY1, MAPRE1 and BAIAP2. Interacts with APC; acts as a scaffold protein for MAPRE1 and APC to stabilize microtubules and promote cell migration. Interacts with SCAI. Interacts with DCAF7, via FH2 domain. Interacts with NCDN. Interacts with OSBPL10, OSBPL2, VIM, TUBB and DYN1. Phosphorylation at Thr-768 is stimulated by cAMP and regulates stability, complex formation and mitochondrial movement. As to expression, expressed in brain, heart, placenta, lung, kidney, pancreas, liver, skeletal muscle and cochlea. Expressed in platelets.

Its subcellular location is the cell membrane. It localises to the cell projection. The protein resides in the ruffle membrane. It is found in the cytoplasm. The protein localises to the cytoskeleton. Its subcellular location is the microtubule organizing center. It localises to the centrosome. The protein resides in the spindle. It is found in the nucleus. In terms of biological role, actin nucleation and elongation factor required for the assembly of F-actin structures, such as actin cables and stress fibers. Binds to the barbed end of the actin filament and slows down actin polymerization and depolymerization. Required for cytokinesis, and transcriptional activation of the serum response factor. DFR proteins couple Rho and Src tyrosine kinase during signaling and the regulation of actin dynamics. Functions as a scaffold protein for MAPRE1 and APC to stabilize microtubules and promote cell migration. Has neurite outgrowth promoting activity. Acts in a Rho-dependent manner to recruit PFY1 to the membrane. In hear cells, it may play a role in the regulation of actin polymerization in hair cells. The MEMO1-RHOA-DIAPH1 signaling pathway plays an important role in ERBB2-dependent stabilization of microtubules at the cell cortex. It controls the localization of APC and CLASP2 to the cell membrane, via the regulation of GSK3B activity. In turn, membrane-bound APC allows the localization of the MACF1 to the cell membrane, which is required for microtubule capture and stabilization. Plays a role in the regulation of cell morphology and cytoskeletal organization. Required in the control of cell shape. Plays a role in brain development. Also acts as an actin nucleation and elongation factor in the nucleus by promoting nuclear actin polymerization inside the nucleus to drive serum-dependent SRF-MRTFA activity. The protein is Protein diaphanous homolog 1 (DIAPH1) of Homo sapiens (Human).